Here is a 189-residue protein sequence, read N- to C-terminus: Mitochondrial FAD-linked sulfhydryl oxidase ERV1 (189 aa).

An ERV/ALR sulfhydryl oxidase domain is found at 83–183; sequence DPPDVEQLGR…FDCNFWEKRW (101 aa). FAD-binding positions include 88-95, H99, and Y128; that span reads EQLGRSSW. 2 disulfides stabilise this stretch: C130-C133 and C159-C176. FAD-binding positions include 159–171 and 182–183; these read CEAH…KLRK and RW.

Homodimer. Interacts with MIA40, forming transient intermolecular disulfide bridges. Requires FAD as cofactor.

It is found in the mitochondrion intermembrane space. The enzyme catalyses 2 R'C(R)SH + O2 = R'C(R)S-S(R)CR' + H2O2. Its function is as follows. FAD-dependent sulfhydryl oxidase that catalyzes disulfide bond formation. Required for the import and folding of small cysteine-containing proteins in the mitochondrial intermembrane space (IMS). Forms a redox cycle with MIA40 that involves a disulfide relay system. Important for maintaining the cysteine residues in MIA40 in an oxidized state. Reduced ERV1 is reoxidized by cytochrome c. Required for the maturation of cytoplasmic, but not of mitochondrial Fe/S proteins. The sequence is that of Mitochondrial FAD-linked sulfhydryl oxidase ERV1 (ERV1) from Saccharomyces cerevisiae (strain ATCC 204508 / S288c) (Baker's yeast).